The following is a 499-amino-acid chain: Transcriptional regulator sdnM (499 aa).

It localises to the nucleus. It functions in the pathway antibiotic biosynthesis. Functionally, transcriptional regulator; part of the gene cluster that mediates the biosynthesis of sordarin and hypoxysordarin, glycoside antibiotics with a unique tetracyclic diterpene aglycone structure. First, the geranylgeranyl diphosphate synthase sdnC constructs GGDP from farnesyl diphosphate and isopentenyl diphosphate. The diterpene cyclase sdnA then catalyzes the cyclization of GGDP to afford cycloaraneosene. Cycloaraneosene is then hydroxylated four times by the putative cytochrome P450 monooxygenases sdnB, sdnE, sdnF and sdnH to give a hydroxylated cycloaraneosene derivative such as cycloaraneosene-8,9,13,19-tetraol. Although the order of the hydroxylations is unclear, at least C8, C9 and C13 of the cycloaraneosene skeleton are hydroxylated before the sordaricin formation. Dehydration of the 13-hydroxy group of the hydroxylated cycloaraneosene derivative might be catalyzed by an unassigned hypothetical protein such as sdnG and sdnP to construct the cyclopentadiene moiety. The FAD-dependent oxidoreductase sdnN is proposed to catalyze the oxidation at C9 of the hydroxylated cycloaraneosene derivative and also catalyze the Baeyer-Villiger oxidation to give the lactone intermediate. The presumed lactone intermediate would be hydrolyzed to give an acrolein moiety and a carboxylate moiety. Then, [4+2]cycloaddition would occur between the acrolein moiety and the cyclopentadiene moiety to give sordaricin. SdnN might also be involved in the [4+2]cycloaddition after the hypothesized oxidation to accommodate the oxidized product and prompt the [4+2]cycloaddition. GDP-6-deoxy-D-altrose may be biosynthesized from GDP-D-mannose by the putative GDP-mannose-4,6-dehydratase sdnI and the short-chain dehydrogenase sdnK. The glycosyltransferase sdnJ catalyzes the attachment of 6-deoxy-D-altrose onto the 19-hydroxy group of sordaricin to give 4'-O-demethylsordarin. The methyltransferase sdnD would complete the biosynthesis of sordarin. Sordarin can be further modified into hypoxysordarin. The unique acyl chain at the 3'-hydroxy group of hypoxysordarin would be constructed by an iterative type I PKS sdnO and the trans-acting polyketide methyltransferase sdnL. SdnL would be responsible for the introduction of an alpha-methyl group of the polyketide chain. Alternatively, the beta-lactamase-like protein sdnR might be responsible for the cleavage and transfer of the polyketide chain from the PKS sdnO to sordarin. Two putative cytochrome P450 monooxygenases, sdnQ and sdnT, might catalyze the epoxidations of the polyketide chain to complete the biosynthesis of hypoxysordarin. Transcriptional regulators sdnM and sdnS are presumably encoded for the transcriptional regulation of the expression of the sdn gene cluster. The chain is Transcriptional regulator sdnM from Sordaria araneosa (Pleurage araneosa).